Reading from the N-terminus, the 447-residue chain is N-succinylarginine dihydrolase (447 aa).

Residues 19–28, Asn110, and 137–138 each bind substrate; these read GGLAVGNIAS and HR. The active site involves Glu174. Arg213 serves as a coordination point for substrate. Residue His249 is part of the active site. The substrate site is built by Asp251 and Asn362. Cys368 serves as the catalytic Nucleophile.

The protein belongs to the succinylarginine dihydrolase family. In terms of assembly, homodimer.

The enzyme catalyses N(2)-succinyl-L-arginine + 2 H2O + 2 H(+) = N(2)-succinyl-L-ornithine + 2 NH4(+) + CO2. It participates in amino-acid degradation; L-arginine degradation via AST pathway; L-glutamate and succinate from L-arginine: step 2/5. Functionally, catalyzes the hydrolysis of N(2)-succinylarginine into N(2)-succinylornithine, ammonia and CO(2). The chain is N-succinylarginine dihydrolase from Nitrosospira multiformis (strain ATCC 25196 / NCIMB 11849 / C 71).